A 286-amino-acid chain; its full sequence is 4-diphosphocytidyl-2-C-methyl-D-erythritol kinase (286 aa).

Lysine 11 is a catalytic residue. 94-104 (PMGGGIGGGSS) is an ATP binding site. Residue aspartate 136 is part of the active site.

It belongs to the GHMP kinase family. IspE subfamily.

It catalyses the reaction 4-CDP-2-C-methyl-D-erythritol + ATP = 4-CDP-2-C-methyl-D-erythritol 2-phosphate + ADP + H(+). It functions in the pathway isoprenoid biosynthesis; isopentenyl diphosphate biosynthesis via DXP pathway; isopentenyl diphosphate from 1-deoxy-D-xylulose 5-phosphate: step 3/6. Functionally, catalyzes the phosphorylation of the position 2 hydroxy group of 4-diphosphocytidyl-2C-methyl-D-erythritol. The sequence is that of 4-diphosphocytidyl-2-C-methyl-D-erythritol kinase from Pseudomonas putida (strain W619).